A 944-amino-acid chain; its full sequence is Envelope glycoprotein B (944 aa).

2 disordered regions span residues 1-37 (MGPP…RPGS) and 68-108 (TDGG…RVTG). An N-terminal signal peptide occupies residues 1–55 (MGPPPPLRRQRLLLPRPSRRRPPARLASGRRSSRPGSSWTWYATLIASLVWYPTV). The segment covering 24-37 (ARLASGRRSSRPGS) has biased composition (low complexity). At 56 to 785 (SSTTLEATVV…GGFVSFFTNP (730 aa)) the chain is on the virion surface side. A compositionally biased stretch (gly residues) spans 71-85 (GATGQASGGGGGGAG). A compositionally biased stretch (polar residues) spans 89 to 99 (PSESPETSADT). Residue N114 is glycosylated (N-linked (GlcNAc...) asparagine; by host). Disulfide bonds link C125/C577, C142/C533, C215/C280, C372/C420, and C608/C645. The interval 182 to 188 (SYAYIYT) is involved in fusion and/or binding to host membrane. An N-linked (GlcNAc...) asparagine; by host glycan is attached at N238. The tract at residues 267 to 274 (GSTWLYKE) is involved in fusion and/or binding to host membrane. N-linked (GlcNAc...) asparagine; by host glycans are attached at residues N369, N409, N414, N426, N481, N485, and N620. 2 hydrophobic membrane proximal region regions span residues 731 to 783 (ITSK…SFFT) and 762 to 782 (LVLG…VSFF). Residues 786–806 (FGSLTLIILVVAVVVIVFLLY) form a helical membrane-spanning segment. Residues 807–944 (QRQRSAVRQP…RDTGSDSELA (138 aa)) are Intravirion-facing. 2 disordered regions span residues 834-878 (TVTT…SATA) and 902-944 (REVP…SELA). The Internalization motif signature appears at 931–934 (YRRL).

It belongs to the herpesviridae glycoprotein B family. Homotrimer; disulfide-linked. Binds to heparan sulfate proteoglycans. Interacts with gH/gL heterodimer. In terms of processing, a proteolytic cleavage by host furin generates two subunits that remain linked by disulfide bonds.

The protein localises to the virion membrane. The protein resides in the host cell membrane. Its subcellular location is the host endosome membrane. It is found in the host Golgi apparatus membrane. Envelope glycoprotein that forms spikes at the surface of virion envelope. Essential for the initial attachment to heparan sulfate moieties of the host cell surface proteoglycans. Involved in fusion of viral and cellular membranes leading to virus entry into the host cell. Following initial binding to its host receptors, membrane fusion is mediated by the fusion machinery composed at least of gB and the heterodimer gH/gL. May be involved in the fusion between the virion envelope and the outer nuclear membrane during virion egress. This Tupaiid herpesvirus (strain 2) (TuHV-2) protein is Envelope glycoprotein B.